Here is a 361-residue protein sequence, read N- to C-terminus: Protein Wnt-2 (361 aa).

The N-terminal stretch at 1–27 is a signal peptide; the sequence is MNASVLGLCLSGPLVLLLAWLAPPVTS. 11 disulfide bridges follow: Cys77–Cys88, Cys128–Cys136, Cys138–Cys158, Cys207–Cys221, Cys209–Cys216, Cys279–Cys310, Cys295–Cys305, Cys309–Cys349, Cys325–Cys340, Cys327–Cys337, and Cys332–Cys333. Ser213 carries the O-palmitoleoyl serine; by PORCN lipid modification. A glycan (N-linked (GlcNAc...) asparagine) is linked at Asn296.

It belongs to the Wnt family. In terms of processing, palmitoleoylation is required for efficient binding to frizzled receptors. Depalmitoleoylation leads to Wnt signaling pathway inhibition.

The protein resides in the secreted. The protein localises to the extracellular space. It is found in the extracellular matrix. In terms of biological role, ligand for members of the frizzled family of seven transmembrane receptors. Probable developmental protein. May be a signaling molecule which affects the development of discrete regions of tissues. Is likely to signal over only few cell diameters. The sequence is that of Protein Wnt-2 (WNT2) from Ornithorhynchus anatinus (Duckbill platypus).